Reading from the N-terminus, the 466-residue chain is MSKTLYQKLYDAHVVYSAPEETPLLYIDRHLVHEVTSPQAFDGLRAMGRKVRQPGKTFATMDHNVSTQTKDINASGEMARIQMQELIKNCEEFGVLLYDLNHPYQGIVHVIGPEQGMTLPGMTIVCGDSHTATHGAFGSLAFGIGTSEVEHVLATQTLKQGRAKTMKIEVTGDAAEGITAKDIVLAVIGKTGSAGGTGHVVEFCGKAIQALSMEGRMTLCNMAIEMGAKAGLVAPDDTTFDYLKGRQFAPTGSNWEQAVAYWRTLKSDDDAKFDTVVTLRAEDIAPQVTWGTNPGQVIAVNQTIPAPESFSDPGERASAEKALAYMDLKPGIKLTEVPIDKVFIGSCTNSRIEDLRAAAAIAKGRKVASGVQAIVVPGSGPVKAQAEAEGLDKIFIDAGFEWRLPGCSMCLAMNNDRLNPGERCASTSNRNFEGRQGRGGRTHLVSPAMAAAAAIAGHFADIRDIH.

C347, C407, and C410 together coordinate [4Fe-4S] cluster.

This sequence belongs to the aconitase/IPM isomerase family. LeuC type 1 subfamily. Heterodimer of LeuC and LeuD. [4Fe-4S] cluster is required as a cofactor.

It catalyses the reaction (2R,3S)-3-isopropylmalate = (2S)-2-isopropylmalate. The protein operates within amino-acid biosynthesis; L-leucine biosynthesis; L-leucine from 3-methyl-2-oxobutanoate: step 2/4. Catalyzes the isomerization between 2-isopropylmalate and 3-isopropylmalate, via the formation of 2-isopropylmaleate. This Serratia proteamaculans (strain 568) protein is 3-isopropylmalate dehydratase large subunit.